Consider the following 145-residue polypeptide: Leptin (145 aa).

An N-terminal signal peptide occupies residues 1 to 12 (LWLWPYLFFIEA).

It belongs to the leptin family.

The protein resides in the secreted. Its function is as follows. Key player in the regulation of energy balance and body weight control. Once released into the circulation, has central and peripheral effects by binding LEPR, found in many tissues, which results in the activation of several major signaling pathways. In the hypothalamus, acts as an appetite-regulating factor that induces a decrease in food intake and an increase in energy consumption by inducing anorexinogenic factors and suppressing orexigenic neuropeptides, also regulates bone mass and secretion of hypothalamo-pituitary-adrenal hormones. In the periphery, increases basal metabolism, influences reproductive function, regulates pancreatic beta-cell function and insulin secretion, is pro-angiogenic for endothelial cell and affects innate and adaptive immunity. In the arcuate nucleus of the hypothalamus, activates by depolarization POMC neurons inducing FOS and SOCS3 expression to release anorexigenic peptides and inhibits by hyperpolarization NPY neurons inducing SOCS3 with a consequent reduction on release of orexigenic peptides. In addition to its known satiety inducing effect, has a modulatory role in nutrient absorption. In the intestine, reduces glucose absorption by enterocytes by activating PKC and leading to a sequential activation of p38, PI3K and ERK signaling pathways which exerts an inhibitory effect on glucose absorption. Acts as a growth factor on certain tissues, through the activation of different signaling pathways increases expression of genes involved in cell cycle regulation such as CCND1, via JAK2-STAT3 pathway, or VEGFA, via MAPK1/3 and PI3K-AKT1 pathways. May also play an apoptotic role via JAK2-STAT3 pathway and up-regulation of BIRC5 expression. Pro-angiogenic, has mitogenic activity on vascular endothelial cells and plays a role in matrix remodeling by regulating the expression of matrix metalloproteinases (MMPs) and tissue inhibitors of metalloproteinases (TIMPs). In innate immunity, modulates the activity and function of neutrophils by increasing chemotaxis and the secretion of oxygen radicals. Increases phagocytosis by macrophages and enhances secretion of pro-inflammatory mediators. Increases cytotoxic ability of NK cells. Plays a pro-inflammatory role, in synergy with IL1B, by inducing NOS2 which promotes the production of IL6, IL8 and Prostaglandin E2, through a signaling pathway that involves JAK2, PI3K, MAP2K1/MEK1 and MAPK14/p38. In adaptive immunity, promotes the switch of memory T-cells towards T helper-1 cell immune responses. Increases CD4(+)CD25(-) T-cell proliferation and reduces autophagy during TCR (T-cell receptor) stimulation, through MTOR signaling pathway activation and BCL2 up-regulation. This Equus caballus (Horse) protein is Leptin (LEP).